We begin with the raw amino-acid sequence, 133 residues long: Holo-[acyl-carrier-protein] synthase (133 aa).

Residues Asp8 and Glu64 each contribute to the Mg(2+) site.

It belongs to the P-Pant transferase superfamily. AcpS family. Mg(2+) serves as cofactor.

The protein resides in the cytoplasm. The enzyme catalyses apo-[ACP] + CoA = holo-[ACP] + adenosine 3',5'-bisphosphate + H(+). Functionally, transfers the 4'-phosphopantetheine moiety from coenzyme A to a Ser of acyl-carrier-protein. This chain is Holo-[acyl-carrier-protein] synthase, found in Shewanella loihica (strain ATCC BAA-1088 / PV-4).